We begin with the raw amino-acid sequence, 330 residues long: Aspartate--ammonia ligase (330 aa).

The protein belongs to the class-II aminoacyl-tRNA synthetase family. AsnA subfamily.

It is found in the cytoplasm. It carries out the reaction L-aspartate + NH4(+) + ATP = L-asparagine + AMP + diphosphate + H(+). The protein operates within amino-acid biosynthesis; L-asparagine biosynthesis; L-asparagine from L-aspartate (ammonia route): step 1/1. The chain is Aspartate--ammonia ligase from Escherichia fergusonii (strain ATCC 35469 / DSM 13698 / CCUG 18766 / IAM 14443 / JCM 21226 / LMG 7866 / NBRC 102419 / NCTC 12128 / CDC 0568-73).